We begin with the raw amino-acid sequence, 369 residues long: Gap junction alpha-5 protein (369 aa).

Topologically, residues 2–19 (GDWSFLGEFLEEVHKHST) are cytoplasmic. A helical membrane pass occupies residues 20-40 (VVGKVWLTVLFIFRMLVLGTA). At 41-76 (AGPLWGDEQSDFMCDTQQPGCENVCYDKAFPISHVR) the chain is on the extracellular side. Residues 77 to 97 (FWVLQIIFVSTPSLVYMGHAM) traverse the membrane as a helical segment. Topologically, residues 98-169 (HTVRMEEKRK…YSILIRTAME (72 aa)) are cytoplasmic. The chain crosses the membrane as a helical span at residues 170–190 (IAFIVGQYILYGIFLETLYIC). Over 191 to 210 (QRAPCPHPVNCYVSRPTEKN) the chain is Extracellular. A helical membrane pass occupies residues 211–231 (VFIIFMLAVAVLSLFLSLAEL). The Cytoplasmic segment spans residues 232–369 (YHLGWKKAKE…SKARSDDLSV (138 aa)). The interval 347 to 369 (NEKRRFSKASRASSKARSDDLSV) is disordered.

It belongs to the connexin family. Alpha-type (group II) subfamily. As to quaternary structure, a connexon is composed of a hexamer of connexins. In terms of tissue distribution, mostly in heart, and in the whole embryo, liver, stomach, and pectoral muscle.

The protein resides in the cell membrane. It localises to the cell junction. Its subcellular location is the gap junction. In terms of biological role, one gap junction consists of a cluster of closely packed pairs of transmembrane channels, the connexons, through which materials of low MW diffuse from one cell to a neighboring cell. The chain is Gap junction alpha-5 protein (GJA5) from Gallus gallus (Chicken).